The primary structure comprises 287 residues: Putative holocytochrome-c1 synthase (287 aa).

Residues 1-12 are compositionally biased toward polar residues; it reads MRGFGSDSSQAS. Disordered stretches follow at residues 1–63 and 81–100; these read MRGF…QPSS and QSQS…SAPL. 2 stretches are compositionally biased toward low complexity: residues 31–63 and 81–92; these read QARA…QPSS and QSQSANSTQQAQ.

It belongs to the cytochrome c-type heme lyase family.

It localises to the mitochondrion inner membrane. It carries out the reaction holo-[cytochrome c] = apo-[cytochrome c] + heme b. Its function is as follows. Probable lyase that catalyzes the covalent linking of the heme group to the cytochrome C apoprotein to produce the mature functional cytochrome. The sequence is that of Putative holocytochrome-c1 synthase from Chaetomium thermophilum (strain DSM 1495 / CBS 144.50 / IMI 039719) (Thermochaetoides thermophila).